Consider the following 273-residue polypeptide: N(omega)-hydroxy-L-arginine amidinohydrolase (273 aa).

Residues Asp109, His111, Asp113, Asp198, and Asp200 each contribute to the Mn(2+) site.

Belongs to the arginase family. It depends on Mn(2+) as a cofactor.

It catalyses the reaction N(omega)-hydroxy-L-arginine + H2O = hydroxyurea + L-ornithine. Involved in the biosynthesis of the antibiotic D-cycloserine (DCS), a cyclic structural analog of D-alanine, used as an antitubercular agent. Catalyzes the hydrolysis of N(omega)-hydroxy-L-arginine (NHA) to yield hydroxyurea (HU) and L-ornithine. In Streptomyces lavendulae, this protein is N(omega)-hydroxy-L-arginine amidinohydrolase.